The sequence spans 875 residues: Alanine--tRNA ligase (875 aa).

Zn(2+) is bound by residues His564, His568, Cys666, and His670.

It belongs to the class-II aminoacyl-tRNA synthetase family. In terms of assembly, homotetramer. Requires Zn(2+) as cofactor.

It localises to the cytoplasm. The enzyme catalyses tRNA(Ala) + L-alanine + ATP = L-alanyl-tRNA(Ala) + AMP + diphosphate. Its function is as follows. Catalyzes the attachment of alanine to tRNA(Ala) in a two-step reaction: alanine is first activated by ATP to form Ala-AMP and then transferred to the acceptor end of tRNA(Ala). Also edits incorrectly charged Ser-tRNA(Ala) and Gly-tRNA(Ala) via its editing domain. The sequence is that of Alanine--tRNA ligase from Yersinia pestis bv. Antiqua (strain Angola).